We begin with the raw amino-acid sequence, 424 residues long: Serine--tRNA ligase (424 aa).

229-231 (TAE) contributes to the L-serine binding site. An ATP-binding site is contributed by 260-262 (RRE). Glu-283 lines the L-serine pocket. Residue 347–350 (EVSS) coordinates ATP. Ser-383 lines the L-serine pocket.

It belongs to the class-II aminoacyl-tRNA synthetase family. Type-1 seryl-tRNA synthetase subfamily. As to quaternary structure, homodimer. The tRNA molecule binds across the dimer.

The protein resides in the cytoplasm. It carries out the reaction tRNA(Ser) + L-serine + ATP = L-seryl-tRNA(Ser) + AMP + diphosphate + H(+). It catalyses the reaction tRNA(Sec) + L-serine + ATP = L-seryl-tRNA(Sec) + AMP + diphosphate + H(+). Its pathway is aminoacyl-tRNA biosynthesis; selenocysteinyl-tRNA(Sec) biosynthesis; L-seryl-tRNA(Sec) from L-serine and tRNA(Sec): step 1/1. Its function is as follows. Catalyzes the attachment of serine to tRNA(Ser). Is also able to aminoacylate tRNA(Sec) with serine, to form the misacylated tRNA L-seryl-tRNA(Sec), which will be further converted into selenocysteinyl-tRNA(Sec). The sequence is that of Serine--tRNA ligase from Roseiflexus castenholzii (strain DSM 13941 / HLO8).